Here is a 476-residue protein sequence, read N- to C-terminus: Ribulose bisphosphate carboxylase large chain (476 aa).

Substrate is bound by residues Asn-124 and Thr-174. Lys-176 (proton acceptor) is an active-site residue. Lys-178 contributes to the substrate binding site. Residues Lys-202, Asp-204, and Glu-205 each coordinate Mg(2+). Lys-202 is subject to N6-carboxylysine. Residue His-295 is the Proton acceptor of the active site. Residues Arg-296, His-328, and Ser-380 each contribute to the substrate site.

This sequence belongs to the RuBisCO large chain family. Type I subfamily. As to quaternary structure, heterohexadecamer of 8 large chains and 8 small chains; disulfide-linked. The disulfide link is formed within the large subunit homodimers. Mg(2+) serves as cofactor. In terms of processing, the disulfide bond which can form in the large chain dimeric partners within the hexadecamer appears to be associated with oxidative stress and protein turnover.

The protein localises to the carboxysome. The catalysed reaction is 2 (2R)-3-phosphoglycerate + 2 H(+) = D-ribulose 1,5-bisphosphate + CO2 + H2O. The enzyme catalyses D-ribulose 1,5-bisphosphate + O2 = 2-phosphoglycolate + (2R)-3-phosphoglycerate + 2 H(+). Its function is as follows. RuBisCO catalyzes two reactions: the carboxylation of D-ribulose 1,5-bisphosphate, the primary event in carbon dioxide fixation, as well as the oxidative fragmentation of the pentose substrate in the photorespiration process. Both reactions occur simultaneously and in competition at the same active site. The chain is Ribulose bisphosphate carboxylase large chain from Cyanothece sp. (strain PCC 7425 / ATCC 29141).